A 201-amino-acid polypeptide reads, in one-letter code: Recombination protein RecR (201 aa).

Residues 57–72 (CADCRTFTEQEVCNIC) form a C4-type zinc finger. A Toprim domain is found at 81–176 (GQICVVESPA…EASRIAHGVP (96 aa)).

It belongs to the RecR family.

Functionally, may play a role in DNA repair. It seems to be involved in an RecBC-independent recombinational process of DNA repair. It may act with RecF and RecO. The chain is Recombination protein RecR from Escherichia coli O17:K52:H18 (strain UMN026 / ExPEC).